The following is a 298-amino-acid chain: Acetylglutamate kinase (298 aa).

Substrate is bound by residues 69–70, arginine 91, and asparagine 191; that span reads GG.

It belongs to the acetylglutamate kinase family. ArgB subfamily.

It localises to the cytoplasm. It catalyses the reaction N-acetyl-L-glutamate + ATP = N-acetyl-L-glutamyl 5-phosphate + ADP. Its pathway is amino-acid biosynthesis; L-arginine biosynthesis; N(2)-acetyl-L-ornithine from L-glutamate: step 2/4. Its function is as follows. Catalyzes the ATP-dependent phosphorylation of N-acetyl-L-glutamate. The polypeptide is Acetylglutamate kinase (Neisseria meningitidis serogroup A / serotype 4A (strain DSM 15465 / Z2491)).